A 212-amino-acid polypeptide reads, in one-letter code: MGRVEKFRFYRQSFDNNKIVKKALINAQKNTESWKKQLNKINQKILINYHPFSEFNKNPVKHHTEPNKLFKTLQELIVDLKNTDFKLLEEKVDRMWLNAAYNQTSSGYESWISDDKGIEKINHLSKFYEANEKQWLKKTSNLTSDLKEYNKILTVFSTESFAFKKSIDNIEPNLFNANKAIFKNLVITLISFMLFSILFFLIFLIVSFVSFV.

Residues 186-206 (VITLISFMLFSILFFLIFLIV) form a helical membrane-spanning segment.

It is found in the membrane. This is an uncharacterized protein from Mycoplasma genitalium (strain ATCC 33530 / DSM 19775 / NCTC 10195 / G37) (Mycoplasmoides genitalium).